A 335-amino-acid chain; its full sequence is MTEVYDFDRSSWDTKGSLAPILPTTYPDGRLIPQVRVIDPGLGDRKDECFMYIFLLGIIEDNDDLGPPIGRSFGSLPLGVGRTAARPEELLKEATLLDIVVRRTASVKEQLVFYNNTPLHVLTPWRKVLTNGSVFSANQVCNAVNLIPLDTAQRFRVVYMSITRLSDDGCYRIPRGMFDFRCKNALAFNILVTIQVEGDFCSNRGNLSMFKDQQATFMVHIGNFSRKKNQAYSADYCKLKIEKMGLVFALGGIGGTSLHIRCTGKMSKTLNAQLGFKKILCYPLMEINEDLNRMLWRLECKIVRIQAVLQPSVPQEFRIYNDVIISDDQGLFKIL.

The protein belongs to the morbillivirus/respirovirus/rubulavirus M protein family.

The protein resides in the virion. Its function is as follows. The M protein has a crucial role in virus assembly and interacts with the RNP complex as well as with the viral membrane. The chain is Matrix protein (M) from Phocine distemper virus (PDV).